Reading from the N-terminus, the 258-residue chain is UPF0246 protein VS_0505 (258 aa).

It belongs to the UPF0246 family.

The sequence is that of UPF0246 protein VS_0505 from Vibrio atlanticus (strain LGP32) (Vibrio splendidus (strain Mel32)).